Reading from the N-terminus, the 429-residue chain is Glutamate-1-semialdehyde 2,1-aminomutase 2 (429 aa).

An N6-(pyridoxal phosphate)lysine modification is found at K267.

This sequence belongs to the class-III pyridoxal-phosphate-dependent aminotransferase family. HemL subfamily. Homodimer. Pyridoxal 5'-phosphate serves as cofactor.

It is found in the cytoplasm. It carries out the reaction (S)-4-amino-5-oxopentanoate = 5-aminolevulinate. Its pathway is porphyrin-containing compound metabolism; protoporphyrin-IX biosynthesis; 5-aminolevulinate from L-glutamyl-tRNA(Glu): step 2/2. This Brevibacillus brevis (strain 47 / JCM 6285 / NBRC 100599) protein is Glutamate-1-semialdehyde 2,1-aminomutase 2.